The sequence spans 112 residues: Protein lin-52 homolog (112 aa).

The protein belongs to the lin-52 family. As to quaternary structure, component of the DREAM complex. In terms of tissue distribution, expressed in the brain, liver and retina. Highly expressed in the retinal ganglion cell and inner nuclear layers at the parr stage. Expressed at a lower level in inner segments of some retinal photoreceptors.

In terms of biological role, may be involved in retinal development. This chain is Protein lin-52 homolog (lin52), found in Oncorhynchus mykiss (Rainbow trout).